A 1655-amino-acid polypeptide reads, in one-letter code: Protein scribble homolog (1655 aa).

The segment at 1 to 818 (MLKCIPLWRC…MRVWRERMVE (818 aa)) is sufficient for targeting to adherens junction and to inhibit cell proliferation. S37 bears the Phosphoserine mark. 16 LRR repeats span residues 37 to 58 (SLEE…FFRL), 60 to 81 (NLRK…VANF), 83 to 104 (QLVE…IKFC), 106 to 127 (ALEI…FTQL), 129 to 150 (SLAH…VGNL), 152 to 174 (NLVT…SFLV), 175 to 197 (KLEQ…GALP), 198 to 219 (NLRE…LGNL), 221 to 243 (RLVC…GGLV), 244 to 265 (LLTD…IGQL), 267 to 288 (QLSI…IGDC), 290 to 312 (NLSE…GKLT), 313 to 334 (KLTN…IGGC), 336 to 357 (ALSV…LAHT), 359 to 381 (ELHV…THLN), and 382 to 402 (LKAL…QTED). The residue at position 378 (T378) is a Phosphothreonine. Disordered stretches follow at residues 417-440 (PQQP…WSDA), 459-606 (DAEE…IRKD), and 628-702 (LLQG…VSAP). Positions 458-474 (EDAEEAAAEKRGLQRRA) form a coiled coil. T475 is modified (phosphothreonine). Residues 479–494 (SELKVMKRSIEGRRSE) are compositionally biased toward basic and acidic residues. S504 carries the phosphoserine modification. The segment covering 537–555 (EGPSAEAQGGSQQEATTAG) has biased composition (low complexity). 2 stretches are compositionally biased toward acidic residues: residues 556–565 (GEEDAEEDYQ) and 660–694 (EEEE…EEDK). Residues 656–701 (RAQKEEEEEEEGSPQEEEEEEEEENRAEEEEASTEEEDKEGAVVSA) are a coiled coil. S688 bears the Phosphoserine mark. The residue at position 689 (T689) is a Phosphothreonine. A phosphoserine mark is found at S708 and S764. Positions 717 to 1229 (IEPARIEEEE…SLESISSIDR (513 aa)) are interaction with ARHGEF7. The region spanning 728 to 815 (TLTILRQTGG…AVQMRVWRER (88 aa)) is the PDZ 1 domain. The interval 728–1194 (TLTILRQTGG…TVLVCDGFEA (467 aa)) is required for interaction with VIM. T826 is subject to Phosphothreonine. Residues 827-853 (PLRPEDDYSPRERRGGGLRLPLLPPES) form a disordered region. The span at 829–841 (RPEDDYSPRERRG) shows a compositional bias: basic and acidic residues. Residues S835, S853, S875, and S939 each carry the phosphoserine modification. 3 consecutive PDZ domains span residues 862 to 950 (VACL…EREA), 1004 to 1093 (EIRL…RRDP), and 1100 to 1194 (ELCI…GFEA). The interaction with tick-borne encephalitis virus RNA-directed RNA polymerase NS5 stretch occupies residues 1105-1117 (KAPGERLGISIRG). Residues S1140, S1220, S1223, S1226, S1232, S1276, S1279, S1295, S1298, S1306, and S1309 each carry the phosphoserine modification. Over residues 1227–1242 (IDRELSPEGPGKEKEL) the composition is skewed to basic and acidic residues. Residues 1227 to 1246 (IDRELSPEGPGKEKELPGQT) are disordered. The tract at residues 1277–1489 (AGSVQRVPSG…APERALSPAE (213 aa)) is disordered. Positions 1302-1311 (QQPPSPPSPD) are enriched in pro residues. Position 1342 is a phosphothreonine (T1342). S1348 is modified (phosphoserine). Positions 1353 to 1365 (SFRERQKYFELEV) are enriched in basic and acidic residues. S1378 is subject to Phosphoserine. The stretch at 1379–1419 (LVGADDLRKMQEEEARKLQQKRAQMLREAAEAGAEARLALD) forms a coiled coil. Positions 1383 to 1395 (DDLRKMQEEEARK) are enriched in basic and acidic residues. Positions 1409–1421 (EAGAEARLALDGE) are enriched in low complexity. A compositionally biased stretch (acidic residues) spans 1422 to 1432 (TLGEEEQEDEQ). A phosphoserine mark is found at S1437, S1445, and S1448. Positions 1461–1472 (AKAERRHQERLR) are enriched in basic and acidic residues. A phosphoserine mark is found at S1475, S1486, and S1508. Residues 1520–1568 (LSRSQEGRGTRGPLERLAEAPSPAPTPSPTPVEDLGPQTSTSPGRLPLS) form a disordered region. The segment covering 1524–1537 (QEGRGTRGPLERLA) has biased composition (basic and acidic residues). S1541 bears the Phosphoserine mark. T1545 bears the Phosphothreonine mark. A phosphoserine mark is found at S1547, S1561, and S1591. A disordered region spans residues 1622–1655 (GRPSPGAVGPEDVALCSSRRPVRPGRRGLGPVPS).

It belongs to the LAP (LRR and PDZ) protein family. Interacts with UBE3A. Interacts with PAK1 and PAK2. Interacts (via PDZ domains) with VANGL2. Interacts (via PDZ domains) with LPP and TRIP6; the interaction is direct. Interacts (via PDZ domains) with TJP2. Interacts (via PDZ domains) with APC; may mediate APC targeting to adherens junctions of epithelial cells. Interacts (via PDZ domains) with TSHR; regulates TSHR trafficking and function. Interacts with ARHGEF7 and GIT1; interacts directly with ARHGEF7. Interacts with CTNNB1. Interacts with MAPK12. Interacts (via PDZ domains 1 and 3) with MCC. Interacts with DLG5. Interacts with STK4/MST1 and LATS1 in the presence of DLG5. Interacts (via PDZ domain 3) with CRTAM (via PDZ-binding motif); the interaction promotes CRTAM and SCRIB polarization in a subset of CD4+ T-cells. Interacts with YES1, when YES1 is in a closed conformation; the interaction facilitates YES1 autophosphorylation. Interacts (via PDZ domains) with VIM; the interaction protects SCRIB from proteasomal degradation and facilitates SCRIB localization to intermediate filaments, the interaction is reduced by cell contact inhibition. As to quaternary structure, (Microbial infection) Interacts (via fourth PDZ domain) with tick-borne encephalitis virus RNA-directed RNA polymerase NS5; this interaction targets viral NS5 to the cell membrane periphery and nucleus and prevents STAT1 phosphorylation, and thus, the activation of the JAK-STAT signaling pathway. Interacts with HPV E6. Interacts with influenza A virus protein NS1; the interaction results in the translocation of SCRIB from the cell membrane to perinuclear puncta. In terms of processing, ubiquitinated; targeted for UBE3A-dependent multiubiquitination in the presence of high-risk HPV E6 proteins and degraded. Post-translationally, palmitoylated. Could be depalmitoylated by LYPLA1 and/or LYPLA2. Palmitoylation of SCRIB by ZDHHC7 is required for its localization to cell-cell junctions, function in the establishement of epithelial cell polarity and the regulation of downstream signaling pathways important for epithelial cell differentiation. In terms of tissue distribution, expressed in kidney, skeletal muscles, liver, lung, breast, intestine, placenta and skin mainly in epithelial cells (at protein level).

The protein resides in the cell membrane. The protein localises to the cell junction. Its subcellular location is the adherens junction. It is found in the cell projection. It localises to the lamellipodium. The protein resides in the cytoplasm. The protein localises to the postsynapse. Its subcellular location is the presynapse. Its function is as follows. Scaffold protein involved in different aspects of polarized cell differentiation regulating epithelial and neuronal morphogenesis and T-cell polarization. Via its interaction with CRTAM, required for the late phase polarization of a subset of CD4+ T-cells, which in turn regulates TCR-mediated proliferation and IFNG and IL22 production. Plays a role in cell directional movement, cell orientation, cell sheet organization and Golgi complex polarization at the cell migration front. Promotes epithelial cell layer barrier function via maintaining cell-cell adhesion. Most probably functions in the establishment of apico-basal cell polarity. May function in cell proliferation regulating progression from G1 to S phase and as a positive regulator of apoptosis for instance during acinar morphogenesis of the mammary epithelium. May regulate cell invasion via MAPK-mediated cell migration and adhesion. May play a role in exocytosis and in the targeting of synaptic vesicles to synapses. Functions as an activator of Rac GTPase activity. This Homo sapiens (Human) protein is Protein scribble homolog.